The sequence spans 264 residues: Thiazole synthase (264 aa).

Catalysis depends on Lys-106, which acts as the Schiff-base intermediate with DXP. Residues Gly-167, 193-194 (AG), and 215-216 (NS) each bind 1-deoxy-D-xylulose 5-phosphate.

The protein belongs to the ThiG family. Homotetramer. Forms heterodimers with either ThiH or ThiS.

Its subcellular location is the cytoplasm. It carries out the reaction [ThiS sulfur-carrier protein]-C-terminal-Gly-aminoethanethioate + 2-iminoacetate + 1-deoxy-D-xylulose 5-phosphate = [ThiS sulfur-carrier protein]-C-terminal Gly-Gly + 2-[(2R,5Z)-2-carboxy-4-methylthiazol-5(2H)-ylidene]ethyl phosphate + 2 H2O + H(+). It functions in the pathway cofactor biosynthesis; thiamine diphosphate biosynthesis. In terms of biological role, catalyzes the rearrangement of 1-deoxy-D-xylulose 5-phosphate (DXP) to produce the thiazole phosphate moiety of thiamine. Sulfur is provided by the thiocarboxylate moiety of the carrier protein ThiS. In vitro, sulfur can be provided by H(2)S. This Pseudomonas savastanoi pv. phaseolicola (strain 1448A / Race 6) (Pseudomonas syringae pv. phaseolicola (strain 1448A / Race 6)) protein is Thiazole synthase.